The following is a 426-amino-acid chain: Enolase (426 aa).

Gln163 lines the (2R)-2-phosphoglycerate pocket. Residue Glu205 is the Proton donor of the active site. Positions 242, 286, and 313 each coordinate Mg(2+). Positions 338, 367, 368, and 389 each coordinate (2R)-2-phosphoglycerate. Residue Lys338 is the Proton acceptor of the active site.

This sequence belongs to the enolase family. Requires Mg(2+) as cofactor.

It localises to the cytoplasm. The protein localises to the secreted. Its subcellular location is the cell surface. It catalyses the reaction (2R)-2-phosphoglycerate = phosphoenolpyruvate + H2O. It functions in the pathway carbohydrate degradation; glycolysis; pyruvate from D-glyceraldehyde 3-phosphate: step 4/5. Catalyzes the reversible conversion of 2-phosphoglycerate (2-PG) into phosphoenolpyruvate (PEP). It is essential for the degradation of carbohydrates via glycolysis. This is Enolase from Helicobacter pylori (strain G27).